We begin with the raw amino-acid sequence, 107 residues long: Small ribosomal subunit protein uS17 (107 aa).

The protein belongs to the universal ribosomal protein uS17 family. As to quaternary structure, part of the 30S ribosomal subunit.

Functionally, one of the primary rRNA binding proteins, it binds specifically to the 5'-end of 16S ribosomal RNA. This chain is Small ribosomal subunit protein uS17, found in Thermotoga petrophila (strain ATCC BAA-488 / DSM 13995 / JCM 10881 / RKU-1).